A 323-amino-acid chain; its full sequence is MYIVTGGAGFIGSAMVWKLNEMGIEDIVVVDNLSTSEKWKNLVNRRYVDYVHRDTFMDMVLHGDLPWDVDAVVHMGACSATTERDADFLMENNLRYSRMLCELCMETGARFINASSAATYGDGSLGFSDDDTTMLRLKPLNMYGYSKQLFDLWAYREGRLDGIASLKFFNVYGPNEYHKGDMRSVICKAYAQIGQEGVMRLFRSCHPDYADGGQMRDFIYVKDCVEVMWWLLQNPGVNGVFNVGTGKARTWNDLVTAVFRAMDREPVIEYIDMPEQLRGKYQSFTEATMGKLRDAGCPVRFTELEDGVTEYVRRYLAAADPHL.

NADP(+) contacts are provided by residues 10 to 11 (FI), 31 to 32 (DN), Lys-38, Arg-53, 75 to 79 (MGACS), and Asn-92. Tyr-143 acts as the Proton acceptor in catalysis. Residue Lys-147 coordinates NADP(+). Substrate is bound at residue Asn-170. Residues Val-171 and Lys-179 each contribute to the NADP(+) site. Lys-179 (proton acceptor) is an active-site residue. Substrate-binding positions include Asp-181, Lys-188, 202–205 (FRSC), Arg-216, and Tyr-281.

Belongs to the NAD(P)-dependent epimerase/dehydratase family. HldD subfamily. In terms of assembly, homopentamer. It depends on NADP(+) as a cofactor.

The catalysed reaction is ADP-D-glycero-beta-D-manno-heptose = ADP-L-glycero-beta-D-manno-heptose. It participates in nucleotide-sugar biosynthesis; ADP-L-glycero-beta-D-manno-heptose biosynthesis; ADP-L-glycero-beta-D-manno-heptose from D-glycero-beta-D-manno-heptose 7-phosphate: step 4/4. Functionally, catalyzes the interconversion between ADP-D-glycero-beta-D-manno-heptose and ADP-L-glycero-beta-D-manno-heptose via an epimerization at carbon 6 of the heptose. The chain is ADP-L-glycero-D-manno-heptose-6-epimerase from Nitratidesulfovibrio vulgaris (strain ATCC 29579 / DSM 644 / CCUG 34227 / NCIMB 8303 / VKM B-1760 / Hildenborough) (Desulfovibrio vulgaris).